The following is a 170-amino-acid chain: Adenine phosphoribosyltransferase (170 aa).

The protein belongs to the purine/pyrimidine phosphoribosyltransferase family. Homodimer.

The protein resides in the cytoplasm. The catalysed reaction is AMP + diphosphate = 5-phospho-alpha-D-ribose 1-diphosphate + adenine. The protein operates within purine metabolism; AMP biosynthesis via salvage pathway; AMP from adenine: step 1/1. Functionally, catalyzes a salvage reaction resulting in the formation of AMP, that is energically less costly than de novo synthesis. In Cenarchaeum symbiosum (strain A), this protein is Adenine phosphoribosyltransferase.